The primary structure comprises 273 residues: Ciliary microtubule inner protein 2B (273 aa).

2 disordered regions span residues 59 to 85 and 123 to 164; these read TLLP…GHER and RHGE…HASP. A compositionally biased stretch (basic and acidic residues) spans 123 to 159; that stretch reads RHGEQESHQLPDGAKGEREVEEDQLREAEEPPLKQEL.

The protein belongs to the CIMIP2 family. In terms of assembly, microtubule inner protein component of sperm flagellar doublet microtubules. Expressed in airway epithelial cells.

It is found in the cytoplasm. The protein localises to the cytoskeleton. The protein resides in the cilium axoneme. Its subcellular location is the flagellum axoneme. Microtubule inner protein (MIP) part of the dynein-decorated doublet microtubules (DMTs) in cilia axoneme, which is required for motile cilia beating. This is Ciliary microtubule inner protein 2B (Cimip2b) from Mus musculus (Mouse).